Here is a 428-residue protein sequence, read N- to C-terminus: Elongation factor 1-alpha (428 aa).

Residues Lys5–Val217 form the tr-type G domain. Residues Gly14–Ser21 are G1. Gly14–Ser21 provides a ligand contact to GTP. Mg(2+) is bound at residue Ser21. The G2 stretch occupies residues Gly68 to Asp72. Positions Asp89 to Gly92 are G3. GTP is bound by residues Asp89–His93 and Asn144–Asp147. Positions Asn144 to Asp147 are G4. Positions Ser181–Trp183 are G5.

It belongs to the TRAFAC class translation factor GTPase superfamily. Classic translation factor GTPase family. EF-Tu/EF-1A subfamily.

The protein localises to the cytoplasm. It catalyses the reaction GTP + H2O = GDP + phosphate + H(+). Functionally, GTP hydrolase that promotes the GTP-dependent binding of aminoacyl-tRNA to the A-site of ribosomes during protein biosynthesis. The protein is Elongation factor 1-alpha of Pyrococcus abyssi (strain GE5 / Orsay).